Here is a 314-residue protein sequence, read N- to C-terminus: Vacuolar membrane protein SCRG_03194 (314 aa).

Positions 32-60 are disordered; it reads KPTSSVVSETSSKSLPSLTSSAFSTSSGA. Residues 93 to 113 form a helical membrane-spanning segment; the sequence is VYIAVGAVIGAIFISILIWWL. 3 positions are modified to phosphoserine: Ser-148, Ser-254, and Ser-274. A disordered region spans residues 240 to 309; sequence EERKLNLNRP…PSMFLDDVLN (70 aa). Basic and acidic residues predominate over residues 254 to 269; sequence SPERKEKKINSMEGYH.

It belongs to the PRM5 family.

The protein resides in the vacuole membrane. The protein is Vacuolar membrane protein SCRG_03194 of Saccharomyces cerevisiae (strain RM11-1a) (Baker's yeast).